A 211-amino-acid polypeptide reads, in one-letter code: Pupal cuticle protein G1A (211 aa).

Tandem repeats lie at residues 13–16, 21–24, 33–36, 111–114, and 179–182.

Component of the cuticle of the pupa of Tenebrio molitor. This chain is Pupal cuticle protein G1A, found in Tenebrio molitor (Yellow mealworm beetle).